Consider the following 292-residue polypeptide: 33 kDa chaperonin (292 aa).

Intrachain disulfides connect C230-C232 and C263-C266.

Belongs to the HSP33 family. Post-translationally, under oxidizing conditions two disulfide bonds are formed involving the reactive cysteines. Under reducing conditions zinc is bound to the reactive cysteines and the protein is inactive.

The protein localises to the cytoplasm. Redox regulated molecular chaperone. Protects both thermally unfolding and oxidatively damaged proteins from irreversible aggregation. Plays an important role in the bacterial defense system toward oxidative stress. In Sodalis glossinidius (strain morsitans), this protein is 33 kDa chaperonin.